A 162-amino-acid polypeptide reads, in one-letter code: ATP synthase subunit b (162 aa).

Residues 6 to 26 (PDIGLLFWMLLSFGIVFFVAA) traverse the membrane as a helical segment.

Belongs to the ATPase B chain family. F-type ATPases have 2 components, F(1) - the catalytic core - and F(0) - the membrane proton channel. F(1) has five subunits: alpha(3), beta(3), gamma(1), delta(1), epsilon(1). F(0) has three main subunits: a(1), b(2) and c(10-14). The alpha and beta chains form an alternating ring which encloses part of the gamma chain. F(1) is attached to F(0) by a central stalk formed by the gamma and epsilon chains, while a peripheral stalk is formed by the delta and b chains.

It is found in the cell inner membrane. F(1)F(0) ATP synthase produces ATP from ADP in the presence of a proton or sodium gradient. F-type ATPases consist of two structural domains, F(1) containing the extramembraneous catalytic core and F(0) containing the membrane proton channel, linked together by a central stalk and a peripheral stalk. During catalysis, ATP synthesis in the catalytic domain of F(1) is coupled via a rotary mechanism of the central stalk subunits to proton translocation. Functionally, component of the F(0) channel, it forms part of the peripheral stalk, linking F(1) to F(0). In Azobacteroides pseudotrichonymphae genomovar. CFP2, this protein is ATP synthase subunit b.